Consider the following 417-residue polypeptide: MLPNTGKLAGCTLFITGASRGIGKAIALKAARDGANVVIAAKTAEAHPKLPGTIYTAASEIEAAGGKALPCIVDVRDENQISAAVEKAVDTFGGIDILVNNASAISLTNTLETPMKKVDLMMGINTRGTYLTSKICIPYLKKSKVAHILNLSPPLNLNPIWFKNHCAYTIAKYGMSMCALGMSEEYKGEIAVNALWPKTAIHTAAMDMLGGSGVDKQCRTPDIMADAAYAILSKPKDFTGNFVIDEELLKHEGIKDLDVYAVSPGHPLLPDFFLDESPEALASAMEEHGATAAFKAGKAQAKSQDSSPLQETFKAIESLVNEEAVKTTQGIYQFVLSGEESGNWFLDLKNGKGGVGSGEPSTKADVVMSMDSGDFIKMFTGKMKPTMAFMSGKLKIKGDMGLALKLEKILGQMNAKL.

NADP(+) contacts are provided by residues 17–23 (GASRGIG), Lys42, and Asp74. The Proton acceptor role is filled by Tyr168. An NADP(+)-binding site is contributed by Lys172. The SCP2 domain occupies 306 to 414 (SSPLQETFKA…KLEKILGQMN (109 aa)).

It belongs to the short-chain dehydrogenases/reductases (SDR) family.

It is found in the peroxisome. Its subcellular location is the mitochondrion. Functionally, has apparently no steroid dehydrogenase activity. Might act as a metabolic regulator that affects systemic adaptation to nutritional cues. The protein is Hydroxysteroid dehydrogenase-like protein 2 (hsdl2) of Xenopus tropicalis (Western clawed frog).